Consider the following 93-residue polypeptide: DNA-directed RNA polymerase subunit omega (93 aa).

Belongs to the RNA polymerase subunit omega family. As to quaternary structure, the RNAP catalytic core consists of 2 alpha, 1 beta, 1 beta' and 1 omega subunit. When a sigma factor is associated with the core the holoenzyme is formed, which can initiate transcription.

It catalyses the reaction RNA(n) + a ribonucleoside 5'-triphosphate = RNA(n+1) + diphosphate. In terms of biological role, promotes RNA polymerase assembly. Latches the N- and C-terminal regions of the beta' subunit thereby facilitating its interaction with the beta and alpha subunits. The sequence is that of DNA-directed RNA polymerase subunit omega from Shewanella piezotolerans (strain WP3 / JCM 13877).